Consider the following 499-residue polypeptide: Endosomal/lysosomal proton channel TMEM175 (499 aa).

Residues 1–30 (MSRLQTEEQAVDSEGDSSLHRRNEEGTQSS) are Cytoplasmic-facing. The segment at 1–30 (MSRLQTEEQAVDSEGDSSLHRRNEEGTQSS) is disordered. Thr-6 carries the post-translational modification Phosphothreonine. A helical membrane pass occupies residues 31-53 (HRMLGFSDALLSIIATVMILPVT). The RxxxFSD motif 1 motif lies at 32-38 (RMLGFSD). The Lumenal portion of the chain corresponds to 54–74 (HTEISPEQQFDKSIQKLLATR). A short helix H1-1 region spans residues 55-60 (TEISPE). Residues 62-68 (QFDKSIQ) are short helix H2-1. Residues 75 to 97 (IAVYLMTFLIVTVAWTAHTRLFQ) traverse the membrane as a helical segment. At 98–103 (VVGKID) the chain is on the cytoplasmic side. A helical transmembrane segment spans residues 104 to 125 (DTLALLNLACMMTITLLPYTFS). At 126 to 135 (LMVTFPDVPL) the chain is on the lumenal side. A helical membrane pass occupies residues 136–157 (GIFLFCVCVIAIGSVQAMIVGY). Residues 158–181 (AFHFPHLLNPQIQCSTHRDLSRRH) lie on the Cytoplasmic side of the membrane. A helical transmembrane segment spans residues 182-202 (ILHLVLRGPALCFVAAVFSLF). Residues 203–207 (FFPLS) are Lumenal-facing. Residues 208–227 (YLLMVTVIFLPHISKATTWC) traverse the membrane as a helical segment. Residues 228-254 (KDKLMGQRESPAHDMEPFSIDLHAPLS) are Cytoplasmic-facing. The helical transmembrane segment at 255–279 (KERVEAFSDGVYAIVATLLILDICE) threads the bilayer. The RxxxFSD motif 2 motif lies at 257 to 263 (RVEAFSD). Over 280 to 306 (DNVPDPKDVQEKFSGSLVAALGAYGPQ) the chain is Lumenal. The short helix H1-2 stretch occupies residues 285-293 (PKDVQEKFS). A short helix H2-2 region spans residues 295 to 301 (SLVAALG). The helical transmembrane segment at 307 to 329 (FLAYFGSFATVGLLWFAHHSLFL) threads the bilayer. Residues 330–335 (HVRKAT) lie on the Cytoplasmic side of the membrane. Residues 336–357 (QTMGLLNILSLAFVGGLPLAYQ) traverse the membrane as a helical segment. The Lumenal segment spans residues 358 to 372 (QTSAFARQPHDELER). The chain crosses the membrane as a helical span at residues 373–393 (VRVSCAIIFFASIFQFAIWTT). Over 394–413 (ALLHQTETLQPAVQFGGQEH) the chain is Cytoplasmic. A helical transmembrane segment spans residues 414 to 437 (AFMFAKLALYPCASLLAFAATCLL). Residues 438-439 (SR) are Lumenal-facing. The helical transmembrane segment at 440–466 (FSTAIFHLMQISVPFAFLLLRLLVRLA) threads the bilayer. The Cytoplasmic portion of the chain corresponds to 467–499 (LAGLQVLRGLWPHHPQQDQSEPEAQSQLLPDPC).

Belongs to the TMEM175 family. In terms of assembly, homodimer. Interacts with AKT (AKT1, AKT2 or AKT3); leading to formation of the lysoK(GF) complex, which activates the channel. Interacts with LAMP1; inhibiting the proton channel activity of TMEM175. Interacts with LAMP2; inhibiting the proton channel activity of TMEM175.

It is found in the endosome membrane. It localises to the lysosome membrane. The catalysed reaction is H(+)(in) = H(+)(out). It catalyses the reaction K(+)(in) = K(+)(out). Active at low pH (under pH 4.6): proton channel activity is activated by luminal side protons. Polyunsaturated fatty acids, such as arachidonic acid, also activate the channel activity. Proton channel activity is directly inhibited by LAMP1 or LAMP2, facilitating lysosomal acidification. Channel activity is activated following interaction with AKT (AKT1, AKT2 or AKT3): interaction promotes activation from closed to an open state. Activation by AKT is independent of AKT serine/threonine-protein kinase activity. In terms of biological role, proton-activated proton channel that catalyzes proton efflux from endosomes and lysosomes to maintain a steady-state pH. Activated at low pH (under pH 4.6) by luminal side protons: selectively mediates lysosomal proton release from lysosomes, eliciting a proton leak that balances V-ATPase activity to maintain pH homeostasis. Regulation of lumenal pH stability is required for autophagosome-lysosome fusion. Also acts as a potassium channel at higher pH, regulating potassium conductance in endosomes and lysosomes. Constitutes the pore-forming subunit of the lysoK(GF) complex, a complex activated by extracellular growth factors. The lysoK(GF) complex is composed of TMEM175 and AKT (AKT1, AKT2 or AKT3), a major target of growth factor receptors: in the complex, TMEM175 channel is opened by conformational changes by AKT, leading to its activation. The lysoK(GF) complex is required to protect neurons against stress-induced damage. The sequence is that of Endosomal/lysosomal proton channel TMEM175 from Mus musculus (Mouse).